A 145-amino-acid chain; its full sequence is Large ribosomal subunit protein eL32 (145 aa).

Belongs to the eukaryotic ribosomal protein eL32 family.

This is Large ribosomal subunit protein eL32 (rpl32e) from Aeropyrum pernix (strain ATCC 700893 / DSM 11879 / JCM 9820 / NBRC 100138 / K1).